The sequence spans 56 residues: Conotoxin Cal6.41b (56 aa).

The first 23 residues, 1–23 (MSGSGAMLLGLLILVAMATSLDT), serve as a signal peptide directing secretion. 3 disulfide bridges follow: Cys27–Cys41, Cys33–Cys50, and Cys40–Cys54.

Expressed by the venom duct.

It is found in the secreted. In terms of biological role, probable neurotoxin. The protein is Conotoxin Cal6.41b of Californiconus californicus (California cone).